The chain runs to 240 residues: 1-(5-phosphoribosyl)-5-[(5-phosphoribosylamino)methylideneamino] imidazole-4-carboxamide isomerase (240 aa).

Asp-10 serves as the catalytic Proton acceptor. Asp-131 (proton donor) is an active-site residue.

The protein belongs to the HisA/HisF family.

The protein resides in the cytoplasm. It catalyses the reaction 1-(5-phospho-beta-D-ribosyl)-5-[(5-phospho-beta-D-ribosylamino)methylideneamino]imidazole-4-carboxamide = 5-[(5-phospho-1-deoxy-D-ribulos-1-ylimino)methylamino]-1-(5-phospho-beta-D-ribosyl)imidazole-4-carboxamide. It participates in amino-acid biosynthesis; L-histidine biosynthesis; L-histidine from 5-phospho-alpha-D-ribose 1-diphosphate: step 4/9. The sequence is that of 1-(5-phosphoribosyl)-5-[(5-phosphoribosylamino)methylideneamino] imidazole-4-carboxamide isomerase from Shouchella clausii (strain KSM-K16) (Alkalihalobacillus clausii).